Reading from the N-terminus, the 280-residue chain is MRDIVFIERDPYAPIRHCYTVSKILYQGKSPYQEIQVIESPEFGRMLILDGVVQLDEKYEFLYHEYLAHVPLHAHPNPRNVLIIGGGDGGTLREVLKHDIVERAVLVDIDKEVIEVSKKYLPTLSVGFQDPRAIVVNEDGYKYVQDYENEFDVIIVDSTDPVGFAHVLTTEDFFRHVYKALKEDGIFVAQTESIHYHLEMVSNIQQRLKKVFPIVDLYTSVIPIYAGYWWTFSIASKKYPVRTPAREVKVQTKIYDADMHEYAFLPESFYNKIVNGEYKY.

The 235-residue stretch at 3–237 (DIVFIERDPY…YWWTFSIASK (235 aa)) folds into the PABS domain. Gln33 lines the S-methyl-5'-thioadenosine pocket. The spermidine site is built by His64 and Asp88. S-methyl-5'-thioadenosine-binding positions include Asp108 and 139–140 (DG). Asp157 functions as the Proton acceptor in the catalytic mechanism. 157–160 (DSTD) lines the spermidine pocket.

This sequence belongs to the spermidine/spermine synthase family. As to quaternary structure, homodimer or homotetramer.

It is found in the cytoplasm. It catalyses the reaction S-adenosyl 3-(methylsulfanyl)propylamine + putrescine = S-methyl-5'-thioadenosine + spermidine + H(+). Its pathway is amine and polyamine biosynthesis; spermidine biosynthesis; spermidine from putrescine: step 1/1. Catalyzes the irreversible transfer of a propylamine group from the amino donor S-adenosylmethioninamine (decarboxy-AdoMet) to putrescine (1,4-diaminobutane) to yield spermidine. The chain is Polyamine aminopropyltransferase 1 from Aquifex aeolicus (strain VF5).